Reading from the N-terminus, the 1801-residue chain is Protein mono-ADP-ribosyltransferase PARP14 (1801 aa).

Ser33 bears the Phosphoserine mark. Positions Ser109–Gly132 are disordered. Macro domains lie at Lys791 to Phe978, Trp1003 to Ala1190, and Asp1216 to Glu1387. Residues Asn824, Leu833, Ser922–Phe926, Asp961, Val1023–Gln1024, Ser1034, Leu1046–Ser1049, Gly1133–Leu1137, Asp1175–Asn1178, Asp1235–Ile1236, Ser1247, Val1258, Gly1332–Ala1336, and Phe1371 contribute to the a glycoprotein site. Residues Ser1403 and Ser1411 each carry the phosphoserine modification. Residues Glu1523–Ser1601 enclose the WWE domain. The region spanning Ile1605 to Lys1801 is the PARP catalytic domain.

It belongs to the ARTD/PARP family. As to quaternary structure, interacts with STAT6. Interacts with PARP10. Interacts with PARP9 in IFNG-stimulated macrophages; the interaction prevents PARP14-mediated STAT1 and STAT6 ADP-riboslylation. Post-translationally, auto-ADP-ribosylated. Expressed in macrophages.

The protein resides in the nucleus. Its subcellular location is the cytoplasm. It catalyses the reaction L-glutamyl-[protein] + NAD(+) = 5-O-(ADP-D-ribosyl)-L-glutamyl-[protein] + nicotinamide. In terms of biological role, ADP-ribosyltransferase that mediates mono-ADP-ribosylation of glutamate residues on target proteins. In contrast to PARP1 and PARP2, it is not able to mediate poly-ADP-ribosylation. Has been shown to catalyze the mono-ADP-ribosylation of STAT1 at 'Glu-657' and 'Glu-705', thus decreasing STAT1 phosphorylation which negatively regulates pro-inflammatory cytokine production in macrophages in response to IFNG stimulation. However, the role of ADP-ribosylation in the prevention of STAT1 phosphorylation has been called into question and it has been suggested that the inhibition of phosphorylation may be the result of sumoylation of STAT1 'Lys-703'. Mono-ADP-ribosylates STAT6; enhancing STAT6-dependent transcription. In macrophages, positively regulates MRC1 expression in response to IL4 stimulation by promoting STAT6 phosphorylation. Mono-ADP-ribosylates PARP9. This Homo sapiens (Human) protein is Protein mono-ADP-ribosyltransferase PARP14.